A 200-amino-acid polypeptide reads, in one-letter code: Oligoribonuclease (200 aa).

Residues Met-5–Leu-169 enclose the Exonuclease domain. The active site involves Tyr-126.

Belongs to the oligoribonuclease family.

It localises to the cytoplasm. In terms of biological role, 3'-to-5' exoribonuclease specific for small oligoribonucleotides. The chain is Oligoribonuclease from Streptomyces avermitilis (strain ATCC 31267 / DSM 46492 / JCM 5070 / NBRC 14893 / NCIMB 12804 / NRRL 8165 / MA-4680).